A 643-amino-acid chain; its full sequence is Chromosomal replication initiator protein DnaA (643 aa).

The segment at 1–97 (MADVPADLAA…VDDSAGEPPP (97 aa)) is domain I, interacts with DnaA modulators. Positions 87-303 (TVDDSAGEPP…ASGPGEPTAR (217 aa)) are disordered. The interval 97 to 302 (PAAPPAQQTP…PASGPGEPTA (206 aa)) is domain II. Polar residues predominate over residues 195-209 (SPSSQDAYGSPSQDY). Over residues 222–269 (QRGDYDTPRAEYEPARPDYDSARPDYESARPEYDQRDPVRRELPEPPA) the composition is skewed to basic and acidic residues. Over residues 291–300 (PAPASGPGEP) the composition is skewed to low complexity. Residues 303 to 519 (RLNPKYLFDT…GALIRVTAFA (217 aa)) form a domain III, AAA+ region region. The ATP site is built by glycine 347, glycine 349, lysine 350, and threonine 351. The segment at 520-643 (SLNRQPVDLG…TELTNRIKNG (124 aa)) is domain IV, binds dsDNA.

Belongs to the DnaA family. Oligomerizes as a right-handed, spiral filament on DNA at oriC.

It is found in the cytoplasm. In terms of biological role, plays an essential role in the initiation and regulation of chromosomal replication. ATP-DnaA binds to the origin of replication (oriC) to initiate formation of the DNA replication initiation complex once per cell cycle. Binds the DnaA box (a 9 base pair repeat at the origin) and separates the double-stranded (ds)DNA. Forms a right-handed helical filament on oriC DNA; dsDNA binds to the exterior of the filament while single-stranded (ss)DNA is stabiized in the filament's interior. The ATP-DnaA-oriC complex binds and stabilizes one strand of the AT-rich DNA unwinding element (DUE), permitting loading of DNA polymerase. After initiation quickly degrades to an ADP-DnaA complex that is not apt for DNA replication. Binds acidic phospholipids. In Streptomyces reticuli, this protein is Chromosomal replication initiator protein DnaA.